We begin with the raw amino-acid sequence, 221 residues long: Casparian strip membrane protein 3 (221 aa).

Positions 1–12 (MDIEKAGSRREE) are enriched in basic and acidic residues. Positions 1-27 (MDIEKAGSRREEEEPIVQRPKLDKGKG) are disordered. Topologically, residues 1 to 58 (MDIEKAGSRREEEEPIVQRPKLDKGKGKAHVFAPPMNYNRIMDKHKQEKMSPAGWKRG) are cytoplasmic. Residues 59-79 (VAIFDFVLRLIAAITAMAAAA) traverse the membrane as a helical segment. At 80 to 109 (KMATTEETLPFFTQFLQFQADYTDLPTMSS) the chain is on the extracellular side. A helical membrane pass occupies residues 110 to 130 (FVIVNSIVGGYLTLSLPFSIV). The Cytoplasmic segment spans residues 131–148 (CILRPLAVPPRLFLILCD). The chain crosses the membrane as a helical span at residues 149-169 (TVMMGLTLMAASASAAIVYLA). The Extracellular portion of the chain corresponds to 170–194 (HNGNSSSNWLPVCQQFGDFCQGTSG). N-linked (GlcNAc...) asparagine glycosylation is present at Asn-173. The helical transmembrane segment at 195–215 (AVVASFIAATLLMFLVILSAF) threads the bilayer. The Cytoplasmic portion of the chain corresponds to 216 to 221 (ALKRTT).

Belongs to the Casparian strip membrane proteins (CASP) family. In terms of assembly, homodimer and heterodimers with other CASP proteins. Interacts with CASP1, CASP2, CASP4 and CASP5.

Its subcellular location is the cell membrane. In terms of biological role, regulates membrane-cell wall junctions and localized cell wall deposition. Required for establishment of the Casparian strip membrane domain (CSD) and the subsequent formation of Casparian strips, a cell wall modification of the root endodermis that determines an apoplastic barrier between the intraorganismal apoplasm and the extraorganismal apoplasm and prevents lateral diffusion. The chain is Casparian strip membrane protein 3 (CASP3) from Arabidopsis thaliana (Mouse-ear cress).